We begin with the raw amino-acid sequence, 1529 residues long: Mediator of RNA polymerase II transcription subunit 1.1 (1529 aa).

Disordered regions lie at residues 685–740 (PDAA…VVGE), 807–919 (QYRM…MRDN), and 933–1529 (PDIE…IDDE). Residues 693–702 (GKQRKPRAKK) show a composition bias toward basic residues. Low complexity-rich tracts occupy residues 722–739 (GAAAVGAGSGRKSSGVVG) and 807–828 (QYRMHMQQQQLQQQQMQSPQQQ). Residues 894–905 (TPSPLSAPPKPF) are compositionally biased toward pro residues. Over residues 908-919 (EQHHFGTKMRDN) the composition is skewed to basic and acidic residues. 2 stretches are compositionally biased toward low complexity: residues 958 to 990 (SSSSDPSTSGESSNATESASSAPLMKPPTTAQT) and 1008 to 1023 (QEQALQKQEQQRIQQQ). Residues 1008–1032 (QEQALQKQEQQRIQQQDSVDSTNSE) adopt a coiled-coil conformation. 3 stretches are compositionally biased toward polar residues: residues 1051 to 1061 (NQVNRVMNMSN), 1068 to 1089 (GSSTNTSDIKPSLASLQKSTGS), and 1096 to 1105 (TPGTSSNIAQ). Basic and acidic residues-rich tracts occupy residues 1113–1130 (LKKEVEEQPPEREKEKLI), 1137–1185 (LKVD…ERDK), 1192–1240 (RDRT…KELS), and 1262–1278 (PKKDTVDEDKKEPKDES). Positions 1169–1202 (EKEDKSQREKDKKERDKERKRRDRDRTEAKKEKD) form a coiled coil. Over residues 1279-1288 (IPGPSTSSES) the composition is skewed to low complexity. Residues 1289 to 1304 (STRKEVAPAPISRKES) show a composition bias toward basic and acidic residues. Positions 1349 to 1365 (SYSGSSNAGPISSSSRG) are enriched in low complexity. Composition is skewed to pro residues over residues 1375–1386 (PVLPPPALPMRG) and 1477–1500 (QPPPPPQMIPLPKENPPPPLAPPS).

This sequence belongs to the Mediator complex subunit 1 family. In terms of assembly, component of the Mediator complex.

The protein localises to the nucleus. Functionally, component of the Mediator complex, a coactivator involved in the regulated transcription of nearly all RNA polymerase II-dependent genes. Mediator functions as a bridge to convey information from gene-specific regulatory proteins to the basal RNA polymerase II transcription machinery. Mediator is recruited to promoters by direct interactions with regulatory proteins and serves as a scaffold for the assembly of a functional preinitiation complex with RNA polymerase II and the general transcription factors. This chain is Mediator of RNA polymerase II transcription subunit 1.1 (sop-3), found in Caenorhabditis briggsae.